Reading from the N-terminus, the 1368-residue chain is DNA-directed RNA polymerase subunit beta (1368 aa).

Belongs to the RNA polymerase beta chain family. In terms of assembly, the RNAP catalytic core consists of 2 alpha, 1 beta, 1 beta' and 1 omega subunit. When a sigma factor is associated with the core the holoenzyme is formed, which can initiate transcription.

It carries out the reaction RNA(n) + a ribonucleoside 5'-triphosphate = RNA(n+1) + diphosphate. DNA-dependent RNA polymerase catalyzes the transcription of DNA into RNA using the four ribonucleoside triphosphates as substrates. This chain is DNA-directed RNA polymerase subunit beta, found in Burkholderia mallei (strain SAVP1).